We begin with the raw amino-acid sequence, 786 residues long: Leucine-rich repeat extensin-like protein 2 (786 aa).

Positions 1-28 are cleaved as a signal peptide; it reads MLLFPSTSLRLFFFLFLLFSSCFLQIRG. N-linked (GlcNAc...) asparagine glycans are attached at residues N73 and N79. LRR repeat units follow at residues 100–124, 125–147, 149–172, 173–196, 198–219, 221–243, 244–267, 268–291, and 292–315; these read TRVVAGIDLNHADMAGYLPRELGLL, TDLALFHLNSNRFCGEVPLTFKH, KLLFELDLSNNRFVGKFPNVVLSL, PSLKFLDLRYNEFEGSIPSKLFDK, LDAIFLNHNRFMFGIPENMGNS, VSALVLADNDLGGCIPGSIGLMG, KTLNEIILSNDNLTGCLPPQIGNL, KNVTVFDISFNRLSGPLPSSIGNM, and KSLEQLNVANNRFTGVIPSSICQL. 2 N-linked (GlcNAc...) asparagine glycosylation sites follow: N255 and N269. Residues N320 and N346 are each glycosylated (N-linked (GlcNAc...) asparagine). Disordered regions lie at residues 352 to 372, 390 to 589, 624 to 645, and 694 to 786; these read IDGKEDQRSSKECSSPASRSV, FKMS…YYAV, PPVYYSPVTQSPPPPPPVYYPP, and PPPS…IPYY. Residues 353 to 362 are compositionally biased toward basic and acidic residues; it reads DGKEDQRSSK. A contains the Ser-Pro(4) repeats region spans residues 384–786; the sequence is SPPPPSFKMS…SPPPPSIPYY (403 aa). Composition is skewed to pro residues over residues 460-477, 487-542, and 566-589; these read YPPPPPPPEYEPSPPPPS, YPPP…PPPK, and SPPPPTYYATQSPPPPPPPTYYAV. Pro residues-rich tracts occupy residues 694-713, 720-737, 752-769, and 777-786; these read PPPSPVYYPPVTQSPPPPST, PASPNQSPPPEYQSPPPK, PTPPSLPPPYYEDTPLPP, and SPPPPSIPYY.

Hydroxylated on proline residues in the S-P-P-P-P repeat. In terms of processing, O-glycosylated on hydroxyprolines. In terms of tissue distribution, mostly expressed in roots, also present in stems at low levels. In roots, confined to differentiation zones, the collet, and meristematic cells of tips.

Its subcellular location is the secreted. The protein localises to the cell wall. Its function is as follows. Modulates cell morphogenesis by regulating cell wall formation and assembly, and/or growth polarization. Together with LRX2, component of the extracellular mechanism regulating root hair morphogenesis and elongation. The protein is Leucine-rich repeat extensin-like protein 2 (LRX2) of Arabidopsis thaliana (Mouse-ear cress).